Consider the following 516-residue polypeptide: Multicopper oxidase CueO (516 aa).

A signal peptide (tat-type signal) is located at residues 1–28 (MQRRDFLKYSVALGVASALPLWSRAVFA). Plastocyanin-like domains are found at residues 55–165 (GQST…IEDD), 227–292 (PRGW…DNKP), and 399–516 (GGKF…GFTV). Cu cation-binding residues include His-101, His-103, His-141, and His-143. Positions 443, 446, 448, 499, 500, 501, and 505 each coordinate Cu cation.

It belongs to the multicopper oxidase family. As to quaternary structure, monomer. Requires Cu cation as cofactor. Predicted to be exported by the Tat system. The position of the signal peptide cleavage has not been experimentally proven.

Its subcellular location is the periplasm. The catalysed reaction is 4 Cu(+) + O2 + 4 H(+) = 4 Cu(2+) + 2 H2O. In terms of biological role, multicopper oxidase involved in copper homeostasis and copper tolerance under aerobic conditions. Is responsible for the oxidation of Cu(+) to the less harmful Cu(2+) in the periplasm, thereby preventing Cu(+) from entering the cytoplasm. The protein is Multicopper oxidase CueO (cueO) of Escherichia coli O157:H7.